Consider the following 242-residue polypeptide: Probable transcriptional regulatory protein Bphyt_1301 (242 aa).

Belongs to the TACO1 family.

The protein resides in the cytoplasm. In Paraburkholderia phytofirmans (strain DSM 17436 / LMG 22146 / PsJN) (Burkholderia phytofirmans), this protein is Probable transcriptional regulatory protein Bphyt_1301.